Consider the following 286-residue polypeptide: Diaminopimelate epimerase (286 aa).

Residues asparagine 13 and asparagine 66 each contribute to the substrate site. Cysteine 75 (proton donor) is an active-site residue. Substrate contacts are provided by residues 76–77 (GN), asparagine 165, asparagine 198, and 216–217 (ER). Cysteine 225 acts as the Proton acceptor in catalysis. A substrate-binding site is contributed by 226-227 (GT).

This sequence belongs to the diaminopimelate epimerase family. As to quaternary structure, homodimer.

The protein resides in the cytoplasm. The enzyme catalyses (2S,6S)-2,6-diaminopimelate = meso-2,6-diaminopimelate. It participates in amino-acid biosynthesis; L-lysine biosynthesis via DAP pathway; DL-2,6-diaminopimelate from LL-2,6-diaminopimelate: step 1/1. Its function is as follows. Catalyzes the stereoinversion of LL-2,6-diaminopimelate (L,L-DAP) to meso-diaminopimelate (meso-DAP), a precursor of L-lysine and an essential component of the bacterial peptidoglycan. In Thermosynechococcus vestitus (strain NIES-2133 / IAM M-273 / BP-1), this protein is Diaminopimelate epimerase.